The chain runs to 311 residues: Aspartate carbamoyltransferase catalytic subunit (311 aa).

Residues Arg55 and Thr56 each coordinate carbamoyl phosphate. Residue Lys84 coordinates L-aspartate. 3 residues coordinate carbamoyl phosphate: Arg105, His133, and Gln136. L-aspartate contacts are provided by Arg166 and Arg229. Residues Leu268 and Pro269 each coordinate carbamoyl phosphate.

This sequence belongs to the aspartate/ornithine carbamoyltransferase superfamily. ATCase family. Heterododecamer (2C3:3R2) of six catalytic PyrB chains organized as two trimers (C3), and six regulatory PyrI chains organized as three dimers (R2).

It carries out the reaction carbamoyl phosphate + L-aspartate = N-carbamoyl-L-aspartate + phosphate + H(+). It participates in pyrimidine metabolism; UMP biosynthesis via de novo pathway; (S)-dihydroorotate from bicarbonate: step 2/3. Functionally, catalyzes the condensation of carbamoyl phosphate and aspartate to form carbamoyl aspartate and inorganic phosphate, the committed step in the de novo pyrimidine nucleotide biosynthesis pathway. The polypeptide is Aspartate carbamoyltransferase catalytic subunit (Alkaliphilus metalliredigens (strain QYMF)).